A 156-amino-acid chain; its full sequence is Small ribosomal subunit protein uS7 (156 aa).

The protein belongs to the universal ribosomal protein uS7 family. As to quaternary structure, part of the 30S ribosomal subunit. Contacts proteins S9 and S11.

Functionally, one of the primary rRNA binding proteins, it binds directly to 16S rRNA where it nucleates assembly of the head domain of the 30S subunit. Is located at the subunit interface close to the decoding center, probably blocks exit of the E-site tRNA. This is Small ribosomal subunit protein uS7 from Streptococcus pneumoniae (strain Taiwan19F-14).